A 1486-amino-acid polypeptide reads, in one-letter code: MIERGKFRSLTLINWNGFFARTFDLDELVTTLSGGNGAGKSTTMAAFVTALIPDLTLLHFRNTTEAGATSGSRDKGLHGKLKAGVCYSMLDTINSRHQRVVVGVRLQQVAGRDRKVDIKPFAIQGLPMSVQPTQLVTETLNERQARVLPLNELKDKLEAMEGVQFKQFNSITDYHSLMFDLGIIARRLRSASDRSKFYRLIEASLYGGISSAITRSLRDYLLPENSGVRKAFQDMEAALRENRMTLEAIRVTQSDRDLFKHLISEATNYVAADYMRHANERRVHLDKALEFRRELHTSRQQLAAEQYKHVDMARELAEHNGAEGDLEADYQAASDHLNLVQTALRQQEKIERYEADLDELQIRLEEQNEVVAEAIERQEENEARAEAAELEVDELKSQLADYQQALDVQQTRAIQYNQAIAALNRAKELCHLPDLTADSAAEWLETFQAKELEATEKMLSLEQKMSMAQTAHSQFEQAYQLVVAINGPLARNEAWDVARELLREGVDQRHLAEQVQPLRMRLSELEQRLREQQEAERLLADFCKRQGKNFDIDELEALHQELEARIASLSDSVSNAREERMALRQEQEQLQSRIQSLMQRAPVWLAAQNSLNQLSEQCGEEFTSSQDVTEYLQQLLEREREAIVERDEVGARKNAVDEEIERLSQPGGSEDQRLNALAERFGGVLLSEIYDDVSLEDAPYFSALYGPSRHAIVVPDLSQVTEHLEGLTDCPEDLYLIEGDPQSFDDSVFSVDELEKAVVVKIADRQWRYSRFPEVPLFGRAARESRIESLHAEREVLSERFATLSFDVQKTQRLHQAFSRFIGSHLAVAFESDPEAEIRQLNSRRVELERALSNHENDNQQQRIQFEQAKEGVTALNRILPRLNLLADDSLADRVDEIRERLDEAQEAARFVQQFGNQLAKLEPIVSVLQSDPEQFEQLKEDYAYSQQMQRDARQQAFALTEVVQRRAHFSYSDSAEMLSGNSDLNEKLRERLEQAEAERTRAREALRGHAAQLSQYNQVLASLKSSYDTKKELLNDLQRELQDIGVRADSGAEERARIRRDELHAQLSNNRSRRNQLEKALTFCEAEMDNLTRKLRKLERDYFEMREQVVTAKAGWCAVMRMVKDNGVERRLHRRELAYLSADDLRSMSDKALGALRLAVADNEHLRDVLRMSEDPKRPERKIQFFVAVYQHLRERIRQDIIRTDDPVEAIEQMEIELSRLTEELTSREQKLAISSRSVANIIRKTIQREQNRIRMLNQGLQNVSFGQVNSVRLNVNVRETHAMLLDVLSEQHEQHQDLFNSNRLTFSEALAKLYQRLNPQIDMGQRTPQTIGEELLDYRNYLEMEVEVNRGSDGWLRAESGALSTGEAIGTGMSILVMVVQSWEDESRRLRGKDISPCRLLFLDEAARLDARSIATLFELCERLQMQLIIAAPENISPEKGTTYKLVRKVFQNTEHVHVVGLRGFAPQLPETLPGTDEAPSQAS.

Residue 34–41 (GGNGAGKS) coordinates ATP. Coiled-coil stretches lie at residues 326-418 (LEAD…QYNQ), 444-480 (LETF…QAYQ), and 509-603 (RHLA…RAPV). Residues 666–783 (PGGSEDQRLN…EVPLFGRAAR (118 aa)) form a flexible hinge region. Coiled-coil stretches lie at residues 835–923 (EAEI…AKLE), 977–1115 (EMLS…TAKA), and 1209–1266 (VEAI…QNVS).

This sequence belongs to the SMC family. MukB subfamily. As to quaternary structure, homodimerization via its hinge domain. Binds to DNA via its C-terminal region. Interacts, and probably forms a ternary complex, with MukE and MukF via its C-terminal region. The complex formation is stimulated by calcium or magnesium. Interacts with tubulin-related protein FtsZ.

It is found in the cytoplasm. The protein localises to the nucleoid. Functionally, plays a central role in chromosome condensation, segregation and cell cycle progression. Functions as a homodimer, which is essential for chromosome partition. Involved in negative DNA supercoiling in vivo, and by this means organize and compact chromosomes. May achieve or facilitate chromosome segregation by condensation DNA from both sides of a centrally located replisome during cell division. The protein is Chromosome partition protein MukB of Escherichia coli (strain ATCC 8739 / DSM 1576 / NBRC 3972 / NCIMB 8545 / WDCM 00012 / Crooks).